Reading from the N-terminus, the 1074-residue chain is Semaphorin-5A (1074 aa).

Residues 1–22 (MKGTCVIAWLFSSLGLWRLAHP) form the signal peptide. The Extracellular segment spans residues 23 to 968 (EAQGTTQCQR…EEKRCGEFNM (946 aa)). A Sema domain is found at 35–484 (HPVISYKEIG…LREHVVKIPL (450 aa)). 2 disulfide bridges follow: Cys-104-Cys-114 and Cys-131-Cys-140. Asn-142, Asn-168, Asn-227, and Asn-277 each carry an N-linked (GlcNAc...) asparagine glycan. 2 disulfides stabilise this stretch: Cys-254–Cys-357 and Cys-278–Cys-320. 3 N-linked (GlcNAc...) asparagine glycosylation sites follow: Asn-323, Asn-367, and Asn-437. 2 disulfide bridges follow: Cys-487–Cys-504 and Cys-496–Cys-513. 2 N-linked (GlcNAc...) asparagine glycosylation sites follow: Asn-536 and Asn-591. 7 TSP type-1 domains span residues 540–593 (DGHF…ANCS), 595–651 (NGGW…LLCP), 653–702 (HMFW…NPCP), 707–765 (TTPW…GCST), 784–839 (NGAW…LPCP), 841–896 (DGVW…QPCP), and 897–944 (ESWS…VFDS). 6 disulfide bridges follow: Cys-607–Cys-644, Cys-611–Cys-650, Cys-622–Cys-634, Cys-665–Cys-696, Cys-669–Cys-701, and Cys-680–Cys-686. Asn-717 carries an N-linked (GlcNAc...) asparagine glycan. 6 disulfide bridges follow: Cys-796/Cys-833, Cys-800/Cys-838, Cys-811/Cys-823, Cys-853/Cys-890, Cys-857/Cys-895, and Cys-868/Cys-880. The N-linked (GlcNAc...) asparagine glycan is linked to Asn-933. A helical membrane pass occupies residues 969–989 (FHMIAVGLSSSILGCLLTLLV). The Cytoplasmic segment spans residues 990-1074 (YTYCQRYQQQ…FTDLNNYDEY (85 aa)).

Belongs to the semaphorin family. In terms of assembly, binds PLXNB3.

It localises to the membrane. In terms of biological role, bifunctional axonal guidance cue regulated by sulfated proteoglycans; attractive effects result from interactions with heparan sulfate proteoglycans (HSPGs), while the inhibitory effects depend on interactions with chondroitin sulfate proteoglycans (CSPGs). Ligand for receptor PLXNB3. In glioma cells, SEMA5A stimulation of PLXNB3 results in the disassembly of F-actin stress fibers, disruption of focal adhesions and cellular collapse as well as inhibition of cell migration and invasion through ARHGDIA-mediated inactivation of RAC1. May promote angiogenesis by increasing endothelial cell proliferation and migration and inhibiting apoptosis. This is Semaphorin-5A (SEMA5A) from Homo sapiens (Human).